The primary structure comprises 283 residues: uncharacterized protein (283 aa).

The first 21 residues, 1–21, serve as a signal peptide directing secretion; the sequence is MKLKLKFLLISLLGSSLLLSA. Cys-22 carries the N-palmitoyl cysteine lipid modification. The S-diacylglycerol cysteine moiety is linked to residue Cys-22.

It belongs to the MG439/MG440 family.

The protein resides in the cell membrane. This is an uncharacterized protein from Mycoplasma pneumoniae (strain ATCC 29342 / M129 / Subtype 1) (Mycoplasmoides pneumoniae).